A 477-amino-acid chain; its full sequence is Inner membrane protein YbhI (477 aa).

The Cytoplasmic segment spans residues 1–5 (MNKKS). A helical transmembrane segment spans residues 6–26 (LWKLILILAIPCIIGFMPAPA). Residue Gly27 is a topological domain, periplasmic. A helical membrane pass occupies residues 28–48 (LSELAWVLFGIYLAAIVGLVI). The Cytoplasmic segment spans residues 49-50 (KP). A helical membrane pass occupies residues 51–71 (FPEPVVLLIAVAASMVVVGNL). Residues 72–87 (SDGAFKTTAVLSGYSS) lie on the Periplasmic side of the membrane. A helical transmembrane segment spans residues 88–108 (GTTWLVFSAFTLSAAFVTTGL). The Cytoplasmic portion of the chain corresponds to 109–148 (GKRIAYLLIGKIGNTTLGLGYVTVFLDLVLAPATPSNTAR). A helical transmembrane segment spans residues 149 to 169 (AGGIVLPIINSVAVALGSEPE). Residues 170-219 (KSPRRVGHYLMMSIYMVTKTTSYMFFTAMAGNILALKMINDILHLQISWG) are Periplasmic-facing. Residues 220 to 240 (GWALAAGLPGIIMLLVTPLVI) form a helical membrane-spanning segment. The Cytoplasmic portion of the chain corresponds to 241-272 (YTMYPPEIKKVDNKTIAKAGLAELGPMKIREK). A helical membrane pass occupies residues 273 to 293 (MLLGVFVLALLGWIFSKSLGV). Over 294 to 297 (DEST) the chain is Periplasmic. The helical transmembrane segment at 298–318 (VAIVVMATMLLLGIVTWEDVV) threads the bilayer. Topologically, residues 319–356 (KNKGGWNTLIWYGGIIGLSSLLSKVKFFEWLAEVFKNN) are cytoplasmic. A helical transmembrane segment spans residues 357-377 (LAFDGHGNVAFFVIIFLSIIV). A topological domain (periplasmic) is located at residue Arg378. Residues 379–399 (YFFASGSAYIVAMLPVFAMLA) form a helical membrane-spanning segment. Over 400-445 (NVSGAPLMLTALALLFSNSYGGMVTHYGGAAGPVIFGVGYNDIKSW) the chain is Cytoplasmic. A helical membrane pass occupies residues 446–466 (WLVGAVLTILTFLVHITLGVW). The Periplasmic segment spans residues 467–477 (WWNMLIGWNML).

This sequence belongs to the SLC13A/DASS transporter (TC 2.A.47) family. DIT1 subfamily.

The protein resides in the cell inner membrane. The protein is Inner membrane protein YbhI (ybhI) of Escherichia coli (strain K12).